The chain runs to 147 residues: uncharacterized protein (147 aa).

Positions 44–147 (LVGYIDKEIH…LKSIKERLSI (104 aa)) constitute an HTH LytTR-type domain.

It localises to the cytoplasm. This is an uncharacterized protein from Staphylococcus aureus (strain MW2).